The following is a 207-amino-acid chain: Guanylate kinase (207 aa).

The region spanning 5 to 185 (GFVLLISGPS…SYEALRAILI (181 aa)) is the Guanylate kinase-like domain. 12 to 19 (GPSGAGKS) lines the ATP pocket.

This sequence belongs to the guanylate kinase family.

Its subcellular location is the cytoplasm. It catalyses the reaction GMP + ATP = GDP + ADP. In terms of biological role, essential for recycling GMP and indirectly, cGMP. This chain is Guanylate kinase (gmk), found in Campylobacter jejuni subsp. jejuni serotype O:2 (strain ATCC 700819 / NCTC 11168).